Consider the following 1980-residue polypeptide: Sodium channel protein type 8 subunit alpha (1980 aa).

Disordered stretches follow at residues 1-20 (MAAR…FTPE) and 28-62 (RIAE…LEAG). The Cytoplasmic segment spans residues 1–132 (MAARLLAPPG…RIAIKILIHS (132 aa)). The segment covering 28-61 (RIAESKLKKPPKADGSHREDDEDSKPKPNSDLEA) has biased composition (basic and acidic residues). The stretch at 114–442 (ILSPFNLIRR…KAMLEQLKKQ (329 aa)) is one I repeat. Residues 133–151 (VFSMIIMCTILTNCVFMTF) traverse the membrane as a helical segment. Residues 152–158 (SNPPDWS) are Extracellular-facing. A helical membrane pass occupies residues 159–179 (KNVEYTFTGIYTFESLVKIIA). At 180–193 (RGFCIDGFTFLRDP) the chain is on the cytoplasmic side. A helical membrane pass occupies residues 194–211 (WNWLDFSVIMMAYITEFV). The Extracellular segment spans residues 212 to 217 (NLGNVS). Residue asparagine 215 is glycosylated (N-linked (GlcNAc...) asparagine). A helical transmembrane segment spans residues 218–234 (ALRTFRVLRALKTISVI). At 235–253 (PGLKTIVGALIQSVKKLSD) the chain is on the cytoplasmic side. The chain crosses the membrane as a helical span at residues 254–273 (VMILTVFCLSVFALIGLQLF). At 274–355 (MGNLRNKCVV…PNYGYTSFDT (82 aa)) the chain is on the extracellular side. The cysteines at positions 281 and 333 are disulfide-linked. Residues asparagine 289, asparagine 295, and asparagine 308 are each glycosylated (N-linked (GlcNAc...) asparagine). A glycan (N-linked (GlcNAc...) (high mannose) asparagine) is linked at asparagine 326. An intramembrane region (pore-forming) is located at residues 356-380 (FSWAFLALFRLMTQDYWENLYQLTL). Glutamate 373 lines the Na(+) pocket. The Extracellular segment spans residues 381-387 (RAAGKTY). A helical transmembrane segment spans residues 388–408 (MIFFVLVIFVGSFYLVNLILA). At 409–753 (VVAMAYEEQN…EIVNLIVMDP (345 aa)) the chain is on the cytoplasmic side. Disordered stretches follow at residues 446 to 530 (AQAA…KAFR) and 568 to 602 (FRGP…DSLF). Over residues 474–486 (PRSSSEISKLSSK) the composition is skewed to low complexity. A compositionally biased stretch (basic residues) spans 489–500 (KERRNRRKKRKQ). Basic and acidic residues-rich tracts occupy residues 501–530 (KELS…KAFR) and 586–602 (DEHS…DSLF). Phosphoserine is present on residues serine 518 and serine 520. An II repeat occupies 735 to 1007 (CHPYWIKLKE…QISVIRIKKG (273 aa)). The chain crosses the membrane as a helical span at residues 754–772 (FVDLAITICIVLNTLFMAM). At 773 to 783 (EHHPMTPQFEH) the chain is on the extracellular side. Residues 784–803 (VLAVGNLVFTGIFTAEMFLK) form a helical membrane-spanning segment. The Cytoplasmic portion of the chain corresponds to 804 to 817 (LIAMDPYYYFQEGW). A helical membrane pass occupies residues 818-837 (NIFDGFIVSLSLMELSLADV). At 838–839 (EG) the chain is on the extracellular side. Residues 840-857 (LSVLRSFRLLRVFKLAKS) form a helical membrane-spanning segment. Over 858-873 (WPTLNMLIKIIGNSVG) the chain is Cytoplasmic. The helical transmembrane segment at 874-892 (ALGNLTLVLAIIVFIFAVV) threads the bilayer. At 893–921 (GMQLFGKSYKECVCKINQDCELPRWHMHD) the chain is on the extracellular side. Cysteine 906 and cysteine 912 are disulfide-bonded. Positions 922-942 (FFHSFLIVFRVLCGEWIETMW) form an intramembrane region, pore-forming. Residues glutamate 936 and glutamate 939 each contribute to the Na(+) site. The Extracellular portion of the chain corresponds to 943–955 (DCMEVAGQAMCLI). Cysteine 944 and cysteine 953 are oxidised to a cystine. A helical membrane pass occupies residues 956-976 (VFMMVMVIGNLVVLNLFLALL). At 977–1199 (LSSFSADNLA…TCFLIVEHNW (223 aa)) the chain is on the cytoplasmic side. A disordered region spans residues 1107–1148 (NLNTEDVSSESDPEGSKDKLDDTSSSEGSTIDIKPEVEEVPV). An III repeat occupies 1180 to 1495 (LGKSWWILRK…KKYYNAMKKL (316 aa)). A helical transmembrane segment spans residues 1200–1217 (FETFIIFMILLSSGALAF). The Extracellular portion of the chain corresponds to 1218–1230 (EDIYIEQRKTIRT). A helical membrane pass occupies residues 1231–1249 (ILEYADKVFTYIFILEMLL). The Cytoplasmic segment spans residues 1250 to 1263 (KWTAYGFVKFFTNA). Residues 1264–1282 (WCWLDFLIVAVSLVSLIAN) form a helical membrane-spanning segment. Residues 1283-1290 (ALGYSELG) lie on the Extracellular side of the membrane. Residues 1291–1309 (AIKSLRTLRALRPLRALSR) traverse the membrane as a helical segment. Over 1310–1326 (FEGMRVVVNALVGAIPS) the chain is Cytoplasmic. A helical transmembrane segment spans residues 1327–1346 (IMNVLLVCLIFWLIFSIMGV). The Extracellular segment spans residues 1347–1399 (NLFAGKYHYCFNETSEIRFEIEDVNNKTECEKLMEGNNTEIRWKNVKINFDNV). Residues cysteine 1356 and cysteine 1376 are joined by a disulfide bond. N-linked (GlcNAc...) asparagine glycans are attached at residues asparagine 1358, asparagine 1372, and asparagine 1383. Positions 1400-1421 (GAGYLALLQVATFKGWMDIMYA) form an intramembrane region, pore-forming. At 1422-1438 (AVDSRKPDEQPKYEDNI) the chain is on the extracellular side. The helical transmembrane segment at 1439-1460 (YMYIYFVIFIIFGSFFTLNLFI) threads the bilayer. Topologically, residues 1461–1523 (GVIIDNFNQQ…IVFDFVTQQA (63 aa)) are cytoplasmic. Residue serine 1497 is modified to Phosphoserine; by PKC. Residues 1504–1801 (IPRPLNKIQG…WEKFDPDATQ (298 aa)) form an IV repeat. Residues 1524–1541 (FDIVIMMLICLNMVTMMV) form a helical membrane-spanning segment. Topologically, residues 1542-1552 (ETDTQSKQMEN) are extracellular. Residues 1553–1571 (ILYWINLVFVIFFTCECVL) traverse the membrane as a helical segment. Topologically, residues 1572–1583 (KMFALRHYYFTI) are cytoplasmic. A helical membrane pass occupies residues 1584-1601 (GWNIFDFVVVILSIVGMF). Topologically, residues 1602–1614 (LADIIEKYFVSPT) are extracellular. A helical transmembrane segment spans residues 1615–1631 (LFRVIRLARIGRILRLI). Over 1632–1650 (KGAKGIRTLLFALMMSLPA) the chain is Cytoplasmic. Residues 1651–1668 (LFNIGLLLFLVMFIFSIF) form a helical membrane-spanning segment. Residues 1669–1690 (GMSNFAYVKHEAGIDDMFNFET) lie on the Extracellular side of the membrane. Positions 1691–1713 (FGNSMICLFQITTSAGWDGLLLP) form an intramembrane region, pore-forming. At 1714-1742 (ILNRPPDCSLDKEHPGSGFKGDCGNPSVG) the chain is on the extracellular side. Cysteine 1721 and cysteine 1736 form a disulfide bridge. The helical transmembrane segment at 1743–1765 (IFFFVSYIIISFLIVVNMYIAII) threads the bilayer. Residues 1766–1980 (LENFSVATEE…RQKEVRESKC (215 aa)) lie on the Cytoplasmic side of the membrane. The 30-residue stretch at 1895-1924 (EEVSAVVLQRAYRGHLARRGFICKKTTSNK) folds into the IQ domain. The segment at 1922–1980 (SNKLENGGTHREKKESTPSTASLPSYDSVTKPEKEKQQRAEEGRRERAKRQKEVRESKC) is disordered. Polar residues predominate over residues 1938-1949 (TPSTASLPSYDS). Over residues 1951–1980 (TKPEKEKQQRAEEGRRERAKRQKEVRESKC) the composition is skewed to basic and acidic residues.

This sequence belongs to the sodium channel (TC 1.A.1.10) family. Nav1.6/SCN8A subfamily. In terms of assembly, the voltage-sensitive sodium channel consists of an ion-conducting pore-forming alpha subunit regulated by one or more beta-1 (SCN1B), beta-2 (SCN2B), beta-3 (SCN3B) and/or beta-4 (SCN4B) subunits. Beta-1 (SCN1B) and beta-3 (SCN3B) are non-covalently associated with alpha, while beta-2 (SCN2B) and beta-4 (SCN4B) are covalently linked by disulfide bonds. Interacts with NEDD4 and NEDD4L. Interacts with FGF13. Interacts with FGF14, GBG3, GBB2 and SCN1B. Interacts with TMEM233. Interacts with the conotoxin GVIIJ. Interacts with the spider beta/delta-theraphotoxin-Pre1a. Interacts with CALM1; the interaction modulates the inactivation rate of SCN8A. In terms of processing, may be ubiquitinated by NEDD4L; which would promote its endocytosis. Post-translationally, phosphorylation at Ser-1497 by PKC in a highly conserved cytoplasmic loop slows inactivation of the sodium channel and reduces peak sodium currents. Expressed in the hippocampus with increased expression in epileptic tissue compared to normal adjacent tissue (at protein level). As to expression, expressed in non-neuronal tissues, such as monocytes/macrophages.

The protein resides in the cell membrane. It is found in the cell projection. It localises to the axon. The protein localises to the cytoplasmic vesicle. Its subcellular location is the podosome. The enzyme catalyses Na(+)(in) = Na(+)(out). With respect to regulation, inhibited by tetrodotoxin and, more weakly, by its metabolite 4,9-ah-tetrodotoxin. Its function is as follows. Pore-forming subunit of a voltage-gated sodium channel complex assuming opened or closed conformations in response to the voltage difference across membranes and through which sodium ions selectively pass along their electrochemical gradient. Contributes to neuronal excitability by regulating action potential threshold and propagation. In terms of biological role, more specifically expressed in non-neuronal cells, could play a role in sodium release from intracellular compartments and participate in the control of podosomes formation and macrophages adhesion and movement. The sequence is that of Sodium channel protein type 8 subunit alpha from Homo sapiens (Human).